Reading from the N-terminus, the 132-residue chain is UPF0299 membrane protein YohJ (132 aa).

4 helical membrane-spanning segments follow: residues 7-27 (IIWQ…AGIF), 31-51 (LLPV…VLLA), 63-83 (GCYV…VGVM), and 93-113 (FGPV…VVSW).

Belongs to the UPF0299 family.

Its subcellular location is the cell inner membrane. This is UPF0299 membrane protein YohJ from Shigella boydii serotype 18 (strain CDC 3083-94 / BS512).